The chain runs to 938 residues: Protocadherin gamma-C4 (938 aa).

A signal peptide spans 1-29; sequence MLRKVRSWTEIWRWATLLFLFYHLGYVCG. Cadherin domains are found at residues 30–133, 134–242, 243–350, 351–455, 456–565, and 572–676; these read QIRY…APRF, PRQQ…APAF, QQSS…APYI, TVTS…PPSF, FQRS…APAV, and PGSL…VPDL. The Extracellular portion of the chain corresponds to 30 to 692; the sequence is QIRYPVPEES…REGESRLTLY (663 aa). Residues Asn265, Asn276, and Asn444 are each glycosylated (N-linked (GlcNAc...) asparagine). The chain crosses the membrane as a helical span at residues 693-713; the sequence is LAVSLVAICFVSFGSFVALLS. Over 714-938 the chain is Cytoplasmic; the sequence is KCLRGAACGV…KKKSGKKEKK (225 aa). Disordered regions lie at residues 791-847 and 908-938; these read PSAP…WPNN and ATLT…KEKK. Positions 822–847 are enriched in polar residues; sequence WRFSQAQRPGTSGSQNGDDTGTWPNN. Positions 928–938 are enriched in basic residues; it reads NKKKSGKKEKK.

Its subcellular location is the cell membrane. Potential calcium-dependent cell-adhesion protein. May be involved in the establishment and maintenance of specific neuronal connections in the brain. This is Protocadherin gamma-C4 (PCDHGC4) from Homo sapiens (Human).